A 270-amino-acid chain; its full sequence is Outer membrane protein P.IIC (270 aa).

The first 25 residues, 1–25 (MQPAKNLLFSSLLFSSLLFSSAARA), serve as a signal peptide directing secretion. Over 26–35 (ASEDGGRGPY) the chain is Extracellular. A beta stranded membrane pass occupies residues 36–44 (VQADLAYAA). Residues 45–76 (ERITHDYPKPTGTGKNKISTVSDYFRNIRTHS) lie on the Periplasmic side of the membrane. A beta stranded transmembrane segment spans residues 77 to 85 (VHPRVSVGY). Over 86–89 (DFGS) the chain is Extracellular. The chain crosses the membrane as a beta stranded span at residues 90–96 (WRIAADY). At 97–142 (ARYRKWNNNKYSVSIKELLRNDNSASGVRGHLNIQTQKTEHQENGT) the chain is on the periplasmic side. Residues 143–157 (FHAVSSLGLSTIYDF) form a beta stranded membrane-spanning segment. Over 158–162 (DTGSR) the chain is Extracellular. A beta stranded membrane pass occupies residues 163–173 (FKPYIGMRVAY). The Periplasmic portion of the chain corresponds to 174–221 (GHVRHQVRSVEQETEIITTYPSNGGGKVSLSSKMPPKSAHHQSNSIRR). Positions 194–217 (PSNGGGKVSLSSKMPPKSAHHQSN) are disordered. The chain crosses the membrane as a beta stranded span at residues 222-234 (VGLGVIAGVGFDI). The Extracellular portion of the chain corresponds to 235–237 (TPN). Residues 238–246 (LTLDTGYRY) form a beta stranded membrane-spanning segment. The Periplasmic segment spans residues 247–261 (HNWGRLENTRFKTHE). The beta stranded transmembrane segment at 262–270 (ASLGMRYRF) threads the bilayer.

Belongs to the opacity porin family. Homotrimer.

The protein localises to the cell outer membrane. This protein serves as a porin. This is Outer membrane protein P.IIC (piiC) from Neisseria gonorrhoeae.